Consider the following 256-residue polypeptide: Protein FixA (256 aa).

This sequence belongs to the ETF beta-subunit/FixA family. In terms of assembly, heterodimer of FixA and FixB.

It participates in amine and polyamine metabolism; carnitine metabolism. Required for anaerobic carnitine reduction. May bring reductant to CaiA. The polypeptide is Protein FixA (Salmonella paratyphi B (strain ATCC BAA-1250 / SPB7)).